An 858-amino-acid polypeptide reads, in one-letter code: Selenocysteine insertion sequence-binding protein 2 (858 aa).

Disordered regions lie at residues 127 to 261 (KPRH…GDVG), 275 to 296 (SDHTDGAVTSNATTSSPSCTQE), and 327 to 625 (LKKT…DSAT). Basic and acidic residues-rich tracts occupy residues 147 to 166 (KPSDERRACEEQKSSSRRAD), 188 to 197 (SSLKSDGYHK), and 215 to 224 (PEFEFSRLDF). Polar residues-rich tracts occupy residues 281–296 (AVTSNATTSSPSCTQE) and 327–352 (LKKTTSSADAKNVSVTSEALSSNPSY). The Nuclear localization signal motif lies at 380–387 (KNKKKKEK). Positions 418-429 (RRHRGQSPKLHS) are enriched in basic residues. Residues 430–447 (KQQTQNEFKTSGKKSQVP) are compositionally biased toward polar residues. Over residues 539–548 (ILKERQERMQ) the composition is skewed to basic and acidic residues. Composition is skewed to polar residues over residues 554–563 (SAVSLTVASD) and 571–582 (GASNQTPSQDNP). The segment at 678–699 (LVLGLREVLKHLKLRKLKCIII) is RNA-binding. The interval 785-819 (MRQEQAGEPGPQSPPSPPMQDPIPSTEEGTLPSTG) is disordered. Positions 795–805 (PQSPPSPPMQD) are enriched in pro residues.

The protein resides in the cytoplasm. It is found in the nucleus. Functionally, mRNA-binding protein that binds to the SECIS (selenocysteine insertion sequence) element present in the 3'-UTR of mRNAs encoding selenoproteins and facilitates the incorporation of the rare amino acid selenocysteine. Insertion of selenocysteine at UGA codons is mediated by SECISBP2 and EEFSEC: SECISBP2 (1) specifically binds the SECIS sequence once the 80S ribosome encounters an in-frame UGA codon and (2) contacts the RPS27A/eS31 of the 40S ribosome before ribosome stalling. (3) GTP-bound EEFSEC then delivers selenocysteinyl-tRNA(Sec) to the 80S ribosome and adopts a preaccommodated state conformation. (4) After GTP hydrolysis, EEFSEC dissociates from the assembly, selenocysteinyl-tRNA(Sec) accommodates, and peptide bond synthesis and selenoprotein elongation occur. In Mus musculus (Mouse), this protein is Selenocysteine insertion sequence-binding protein 2.